The primary structure comprises 587 residues: Protein NRT1/ PTR FAMILY 2.9 (587 aa).

Transmembrane regions (helical) follow at residues 35–55 (FEKLGIVGSSSNLVIYLTTVF), 65–85 (VVNIYGGTSNFGTIVAAFLCD), 94–114 (LSFAMIACFLGSVAMDLTAVI), 135–155 (IGQIMFLAGAMVLLVIGAGGI), 181–201 (FFNWYFFTFTFAQMVSLTLIV), 209–229 (WSIGLAIPAILMLLGCIIFFA), 325–345 (CVIRVLPVWLSAALFYLAYIQ), 368–388 (IPAGSYTVFLMLGMTIFIPIY), 412–432 (VGAGLFLCITSMMVSAIVEQY), 457–477 (GMWLIPQLVLMGIADALAGVG), 493–513 (FAGSLYYCGIGLASYLSTFLL), and 540–560 (YFYFLVAGMMTLNLAYFLLVS).

The protein belongs to the major facilitator superfamily. Proton-dependent oligopeptide transporter (POT/PTR) (TC 2.A.17) family. As to expression, expressed in roots, stems and major veins of the leaves. Detected in the companion cells of the root phloem.

The protein resides in the cell membrane. Low-affinity nitrate transporter facilitating nitrate loading into root phloem. Not involved in dipeptides transport, but has a weak glucosinolate transport activity. The chain is Protein NRT1/ PTR FAMILY 2.9 (NPF2.9) from Arabidopsis thaliana (Mouse-ear cress).